Here is a 437-residue protein sequence, read N- to C-terminus: Double-stranded RNA-binding protein 3 (437 aa).

The interval 1 to 22 (MKKKSAPTPLPPETANTSPAPI) is disordered. DRBM domains are found at residues 35-104 (VFKS…EIVK) and 120-187 (LCKN…AIQG). Basic and acidic residues-rich tracts occupy residues 288–310 (AKRVEDEPPRDIEMVQPDKENQH) and 320–330 (DEARVEQEPSR). Positions 288–331 (AKRVEDEPPRDIEMVQPDKENQHSDAALVQPDDEARVEQEPSRD) are disordered.

Its function is as follows. Binds double-stranded RNA. This Oryza sativa subsp. japonica (Rice) protein is Double-stranded RNA-binding protein 3 (DRB3).